Here is a 327-residue protein sequence, read N- to C-terminus: Microtubule-associated protein RP/EB family member 2 (327 aa).

The tract at residues 1 to 21 (MPGPTQTLSPNGENNNDIIQD) is disordered. Proline 2 is subject to N-acetylalanine. Phosphoserine is present on serine 9. Positions 57–159 (TMSRHDIIAW…FIQWFKKFYD (103 aa)) constitute a Calponin-homology (CH) domain. Tyrosine 167 is modified (phosphotyrosine). 2 disordered regions span residues 171 to 240 (EARQ…DKDL) and 299 to 327 (ASEE…QEEY). The tract at residues 187-327 (QIFNLPKKSH…EQQPPQQEEY (141 aa)) is DCTN1-binding. Positions 200-234 (SPTAGAAKSSPAAKPGSTPSRPSSAKRASSSGSAS) are enriched in low complexity. Phosphoserine occurs at positions 219 and 236. In terms of domain architecture, EB1 C-terminal spans 236-306 (SDKDLETQVI…LYASEEHEGH (71 aa)). An APC-binding region spans residues 259–302 (EGVEKERDFYFGKLREIELLCQEHGQENDDLVQRLMDILYASEE). Basic and acidic residues predominate over residues 300 to 317 (SEEHEGHTEEPEAEEQAH). Low complexity predominate over residues 318–327 (EQQPPQQEEY).

Belongs to the MAPRE family. Interacts with DCTN1. Interacts with APC (via C-terminal). Interacts with monomeric and polymerized tubulin. Interacts with SLAIN1. Interacts (via the N-terminal region) with BAG1. Interacts with ASB14. Interacts with HAX1; this interaction is essential for epidermal cell migration. Post-translationally, phosphorylated at Ser-236 by CK2 leading to enhanced cell adhesion. Phosphorylated by CDK1 and AURKB during mitosis reduces the binding affinity of MAPRE2 for microtubules. Ubiquitinated in an ASB14-dependent manner; leading to proteasomal degradation. Expressed in different tumor cell lines. Up-regulated in activated B- and T-lymphocytes.

Its subcellular location is the cytoplasm. The protein localises to the cytoskeleton. Adapter protein that is involved in microtubule polymerization, and spindle function by stabilizing microtubules and anchoring them at centrosomes. Therefore, ensures mitotic progression and genome stability. Acts as a central regulator of microtubule reorganization in apico-basal epithelial differentiation. Plays a role during oocyte meiosis by regulating microtubule dynamics. Participates in neurite growth by interacting with plexin B3/PLXNB3 and microtubule reorganization during apico-basal epithelial differentiation. Also plays an essential role for cell migration and focal adhesion dynamics. Mechanistically, recruits HAX1 to microtubules in order to regulate focal adhesion dynamics. In Homo sapiens (Human), this protein is Microtubule-associated protein RP/EB family member 2 (MAPRE2).